Consider the following 420-residue polypeptide: Na(+)/H(+) antiporter NhaA (420 aa).

11 helical membrane passes run Val-4 to Ile-24, Asp-70 to Leu-90, Leu-104 to Phe-124, Ala-132 to Gly-152, Phe-165 to Tyr-185, Pro-192 to Leu-212, Leu-233 to Met-250, Val-299 to Gly-319, Trp-323 to Leu-343, Leu-361 to Val-381, and Gly-395 to Val-415.

The protein belongs to the NhaA Na(+)/H(+) (TC 2.A.33) antiporter family.

The protein localises to the cell inner membrane. It catalyses the reaction Na(+)(in) + 2 H(+)(out) = Na(+)(out) + 2 H(+)(in). Functionally, na(+)/H(+) antiporter that extrudes sodium in exchange for external protons. This chain is Na(+)/H(+) antiporter NhaA, found in Jannaschia sp. (strain CCS1).